Consider the following 398-residue polypeptide: MSALLRSSLRFKHMSAVNRLTQQLRLLTASAPLSAANTAGKAPFKVAVVGSGNWGTTVAKIVAENCTAHPELFEPEVRVWVREEKVNGKNLTDIFNAEHENVRYLPKIKLPHNLIAEPDLLKAVEGANIIVFNLPHQFLAGVCKQLKGHVNPKARAISCLKGLDVTPQGVYLLSDVIENETGLHCGVLSGANLATEIALEKYSETTVAYNRPKDFFGEGDVTNDVLKALFHRPYFHVRCVQDVAGVSIGGALKNVVALCAGFVEGKNWGDNAKAAIMRRGMLEMINFSKRFFPETDINTLTVESAGVADLITSCAGGRNFKVGRAFGKESGSGKTIQDVEKELLNGQSAQGVITCNEVHELLKNKNMQKDFPLFESTWGIIHGELKIDDLPEILYHAN.

Residues Gly50–Gly55, Phe138, Lys161, and Ala194 contribute to the NAD(+) site. A substrate-binding site is contributed by Lys161. Lys253 functions as the Proton acceptor in the catalytic mechanism. Arg318 and Gln350 together coordinate NAD(+). A substrate-binding site is contributed by Arg318 to Asn319.

The protein belongs to the NAD-dependent glycerol-3-phosphate dehydrogenase family.

The protein resides in the cytoplasm. The catalysed reaction is sn-glycerol 3-phosphate + NAD(+) = dihydroxyacetone phosphate + NADH + H(+). The protein is Glycerol-3-phosphate dehydrogenase [NAD(+)] 1 (GPD1) of Yarrowia lipolytica (strain CLIB 122 / E 150) (Yeast).